The chain runs to 271 residues: Putative phosphoenolpyruvate synthase regulatory protein (271 aa).

151 to 158 (GVSRSGKT) is an ADP binding site.

It belongs to the pyruvate, phosphate/water dikinase regulatory protein family. PSRP subfamily.

It catalyses the reaction [pyruvate, water dikinase] + ADP = [pyruvate, water dikinase]-phosphate + AMP + H(+). The enzyme catalyses [pyruvate, water dikinase]-phosphate + phosphate + H(+) = [pyruvate, water dikinase] + diphosphate. Functionally, bifunctional serine/threonine kinase and phosphorylase involved in the regulation of the phosphoenolpyruvate synthase (PEPS) by catalyzing its phosphorylation/dephosphorylation. This is Putative phosphoenolpyruvate synthase regulatory protein from Burkholderia mallei (strain NCTC 10247).